Here is a 242-residue protein sequence, read N- to C-terminus: Putative serine/threonine-protein kinase (242 aa).

One can recognise a Protein kinase domain in the interval 49-242 (FSSKNKVGEG…KSDVYSFGVL (194 aa)). Residues 55 to 63 (VGEGGCGAV) and lysine 77 each bind ATP. Residue aspartate 177 is the Proton acceptor of the active site.

It belongs to the protein kinase superfamily. Ser/Thr protein kinase family.

The enzyme catalyses L-seryl-[protein] + ATP = O-phospho-L-seryl-[protein] + ADP + H(+). It catalyses the reaction L-threonyl-[protein] + ATP = O-phospho-L-threonyl-[protein] + ADP + H(+). The protein is Putative serine/threonine-protein kinase of Helianthus annuus (Common sunflower).